The following is a 726-amino-acid chain: 1,4-alpha-glucan branching enzyme GlgB (726 aa).

Asp-407 functions as the Nucleophile in the catalytic mechanism. Residue Glu-460 is the Proton donor of the active site.

It belongs to the glycosyl hydrolase 13 family. GlgB subfamily. In terms of assembly, monomer.

The catalysed reaction is Transfers a segment of a (1-&gt;4)-alpha-D-glucan chain to a primary hydroxy group in a similar glucan chain.. It participates in glycan biosynthesis; glycogen biosynthesis. In terms of biological role, catalyzes the formation of the alpha-1,6-glucosidic linkages in glycogen by scission of a 1,4-alpha-linked oligosaccharide from growing alpha-1,4-glucan chains and the subsequent attachment of the oligosaccharide to the alpha-1,6 position. This is 1,4-alpha-glucan branching enzyme GlgB from Hydrogenovibrio crunogenus (strain DSM 25203 / XCL-2) (Thiomicrospira crunogena).